A 178-amino-acid polypeptide reads, in one-letter code: Probable chorismate pyruvate-lyase (178 aa).

Substrate is bound by residues R73, L111, and E163.

Belongs to the UbiC family.

The protein localises to the cytoplasm. It catalyses the reaction chorismate = 4-hydroxybenzoate + pyruvate. It participates in cofactor biosynthesis; ubiquinone biosynthesis. In terms of biological role, removes the pyruvyl group from chorismate, with concomitant aromatization of the ring, to provide 4-hydroxybenzoate (4HB) for the ubiquinone pathway. This chain is Probable chorismate pyruvate-lyase, found in Pseudomonas aeruginosa (strain ATCC 15692 / DSM 22644 / CIP 104116 / JCM 14847 / LMG 12228 / 1C / PRS 101 / PAO1).